A 539-amino-acid chain; its full sequence is 4-hydroxybenzoate--CoA/benzoate--CoA ligase (539 aa).

It belongs to the ATP-dependent AMP-binding enzyme family. Benzoate-CoA ligase subfamily. In terms of assembly, homodimer. Post-translationally, the N-terminus is blocked.

The catalysed reaction is 4-hydroxybenzoate + ATP + CoA = 4-hydroxybenzoyl-CoA + AMP + diphosphate. The enzyme catalyses benzoate + ATP + CoA = benzoyl-CoA + AMP + diphosphate. Functionally, catalyzes the ligation of 4-hydroxybenzoate, benzoate or cyclohex-1,4-dienecarboxylate and CoA at the expense of ATP. The enzyme shows low activity towards cyclo-2,5-dienecarboxylate, 4-fluorobenzoate, 4-chlorobenzoate and 2-methoxybenzoate. This chain is 4-hydroxybenzoate--CoA/benzoate--CoA ligase (hbaA), found in Rhodopseudomonas palustris (strain ATCC BAA-98 / CGA009).